A 357-amino-acid polypeptide reads, in one-letter code: Arginine kinase Cal b 2.0101 (357 aa).

The region spanning K9–K91 is the Phosphagen kinase N-terminal domain. G64–Y68 contributes to the L-arginine binding site. A Phosphagen kinase C-terminal domain is found at F119–M356. ATP-binding positions include S122 to R126 and H185. C201 and C271 form a disulfide bridge. E225 is a binding site for L-arginine. Residue R229 participates in ATP binding. C271 serves as a coordination point for L-arginine. Residues R280–H284 and R309–E314 contribute to the ATP site. E314 serves as a coordination point for L-arginine.

It belongs to the ATP:guanido phosphotransferase family. Expressed in chela muscle (at protein level). Expressed in muscle.

The catalysed reaction is L-arginine + ATP = N(omega)-phospho-L-arginine + ADP + H(+). Catalyzes the reversible transfer of high energy ATP gamma-phosphate group to L-arginine. This chain is Arginine kinase Cal b 2.0101, found in Callinectes bellicosus (Warrior swimming crab).